A 248-amino-acid chain; its full sequence is Metallo-beta-lactamase type 2 (248 aa).

The signal sequence occupies residues 1–21 (MKGLKGLLVLALGFTGLQVFG). Zn(2+) is bound by residues His97, His99, Asp101, His160, and Cys179. Substrate is bound at residue Lys182. Zn(2+) is bound at residue His221.

This sequence belongs to the metallo-beta-lactamase superfamily. Class-B beta-lactamase family. In terms of assembly, monomer. It depends on Zn(2+) as a cofactor.

It localises to the periplasm. It catalyses the reaction a beta-lactam + H2O = a substituted beta-amino acid. Confers resistance to the different beta-lactams antibiotics (penicillin, cephalosporin and carbapenem) via the hydrolysis of the beta-lactam ring. In Elizabethkingia meningoseptica (Chryseobacterium meningosepticum), this protein is Metallo-beta-lactamase type 2 (blaB7).